We begin with the raw amino-acid sequence, 422 residues long: Probable Na(+)/H(+) antiporter 2 (422 aa).

Transmembrane regions (helical) follow at residues 3–23 (IVLF…IAKI), 28–48 (GIPD…LNVI), 52–72 (IVES…LFIG), 93–113 (ILAL…VFHL), 119–139 (IGLL…IPIF), 157–177 (VFND…LGLA), 183–203 (ILEF…AGKF), 216–236 (YIAP…EGIF), 242–262 (YEIS…NVIV), 281–301 (LSIF…SIPL), 307–327 (LPAF…GVLI), 341–361 (IYLA…AMVY), and 384–404 (LAGT…VLEA).

Belongs to the monovalent cation:proton antiporter 1 (CPA1) transporter (TC 2.A.36) family.

Its subcellular location is the cell membrane. Functionally, this is probably a Na(+)/H(+) antiporter. This Methanocaldococcus jannaschii (strain ATCC 43067 / DSM 2661 / JAL-1 / JCM 10045 / NBRC 100440) (Methanococcus jannaschii) protein is Probable Na(+)/H(+) antiporter 2.